Here is a 115-residue protein sequence, read N- to C-terminus: Phosphoribosyl-ATP pyrophosphatase (115 aa).

Belongs to the PRA-PH family.

The protein resides in the cytoplasm. The enzyme catalyses 1-(5-phospho-beta-D-ribosyl)-ATP + H2O = 1-(5-phospho-beta-D-ribosyl)-5'-AMP + diphosphate + H(+). Its pathway is amino-acid biosynthesis; L-histidine biosynthesis; L-histidine from 5-phospho-alpha-D-ribose 1-diphosphate: step 2/9. The chain is Phosphoribosyl-ATP pyrophosphatase from Bordetella bronchiseptica (strain ATCC BAA-588 / NCTC 13252 / RB50) (Alcaligenes bronchisepticus).